The sequence spans 396 residues: Probable sugar efflux transporter (396 aa).

Transmembrane regions (helical) follow at residues 15–35 (VVTL…PVGL), 50–70 (VGIM…PFML), 81–101 (LICL…SWSF), 103–123 (VLVI…SITA), 136–156 (AQAL…GLPL), 170–190 (FFAI…LLPL), 209–229 (PALM…YTAY), 246–266 (FATA…VIFG), 275–295 (ALVS…LPAA), 299–319 (IHLG…GLGM), 333–353 (VAMA…ALVG), and 364–384 (MIGY…IIIF).

This sequence belongs to the major facilitator superfamily. SotB (TC 2.A.1.2) family.

Its subcellular location is the cell inner membrane. Functionally, involved in the efflux of sugars. The physiological role may be the reduction of the intracellular concentration of toxic sugars or sugar metabolites. The protein is Probable sugar efflux transporter of Escherichia coli O6:K15:H31 (strain 536 / UPEC).